The chain runs to 573 residues: Ribosomal RNA-processing protein 9 (573 aa).

A disordered region spans residues 1 to 63 (MSDVTQQKKR…FEGENPADKR (63 aa)). The residue at position 2 (serine 2) is an N-acetylserine. Residues 25 to 58 (DEEITDPSSNEDEQLEVSDEEDALESEEEFEGEN) are compositionally biased toward acidic residues. Residues 32-106 (SSNEDEQLEV…KERTIDEYNN (75 aa)) adopt a coiled-coil conformation. Phosphoserine is present on serine 50. WD repeat units follow at residues 234–273 (GHYDEILTVAASPDGKYVVTGGRDRKLIVWSTESLSPVKV), 278–317 (DRRGEVLSLAFRKNSDQLYASCADFKIRTYSINQFSQLEI), 320–359 (GHHDIVEDISALAMERCVTVGARDRTAMLWKIPDETRLTF), 397–435 (FCEGSIDVVSMVDDFHFITGSDNGNICLWSLAKKKPIFT), 471–509 (QPFWITSLYAIPYSNVFISGSWSGSLKVWKISDNLRSFE), and 516–562 (GAKG…ARNG).

Belongs to the WD repeat RRP9 family. As to quaternary structure, interacts with UTP25. Component of the ribosomal small subunit (SSU) processome composed of at least 40 protein subunits and snoRNA U3.

It localises to the nucleus. It is found in the nucleolus. Functionally, involved in nucleolar processing of pre-18S ribosomal RNA. Required for efficient pre-rRNA cleavage at sites A0, A1 and A2, and biosynthesis of 18S rRNA. This Saccharomyces cerevisiae (strain ATCC 204508 / S288c) (Baker's yeast) protein is Ribosomal RNA-processing protein 9 (RRP9).